A 91-amino-acid polypeptide reads, in one-letter code: MSITTERKQQLIKEYAITENDTGSSAVQCAILTERINNLTEHFKSNHKDHASRRGLLILVGRRRRLLNYIKKNNISEYLELISKLGIRKVK.

This sequence belongs to the universal ribosomal protein uS15 family. In terms of assembly, part of the 30S ribosomal subunit. Forms a bridge to the 50S subunit in the 70S ribosome, contacting the 23S rRNA.

In terms of biological role, one of the primary rRNA binding proteins, it binds directly to 16S rRNA where it helps nucleate assembly of the platform of the 30S subunit by binding and bridging several RNA helices of the 16S rRNA. Its function is as follows. Forms an intersubunit bridge (bridge B4) with the 23S rRNA of the 50S subunit in the ribosome. The protein is Small ribosomal subunit protein uS15 of Rickettsia canadensis (strain McKiel).